The chain runs to 374 residues: Alanine racemase (374 aa).

Lys35 functions as the Proton acceptor; specific for D-alanine in the catalytic mechanism. Lys35 carries the post-translational modification N6-(pyridoxal phosphate)lysine. Arg130 contacts substrate. Tyr261 (proton acceptor; specific for L-alanine) is an active-site residue. A substrate-binding site is contributed by Met309.

The protein belongs to the alanine racemase family. It depends on pyridoxal 5'-phosphate as a cofactor.

It carries out the reaction L-alanine = D-alanine. It functions in the pathway amino-acid biosynthesis; D-alanine biosynthesis; D-alanine from L-alanine: step 1/1. Its function is as follows. Catalyzes the interconversion of L-alanine and D-alanine. May also act on other amino acids. This chain is Alanine racemase (alr), found in Albidiferax ferrireducens (strain ATCC BAA-621 / DSM 15236 / T118) (Rhodoferax ferrireducens).